The chain runs to 243 residues: Isoprenyl transferase 2 (243 aa).

Asp-23 is a catalytic residue. Position 23 (Asp-23) interacts with Mg(2+). Residues 24–27, Trp-28, Arg-36, His-40, and 68–70 contribute to the substrate site; these read GNGR and STE. The Proton acceptor role is filled by Asn-71. Substrate is bound by residues Trp-72, Arg-74, Arg-191, and 197–199; that span reads RTS. Position 210 (Glu-210) interacts with Mg(2+).

This sequence belongs to the UPP synthase family. As to quaternary structure, homodimer. Mg(2+) serves as cofactor.

In terms of biological role, catalyzes the condensation of isopentenyl diphosphate (IPP) with allylic pyrophosphates generating different type of terpenoids. This chain is Isoprenyl transferase 2, found in Corynebacterium efficiens (strain DSM 44549 / YS-314 / AJ 12310 / JCM 11189 / NBRC 100395).